A 266-amino-acid polypeptide reads, in one-letter code: Mitochondrial genome maintenance protein MGM101 (266 aa).

A mitochondrion-targeting transit peptide spans 1–23; it reads MLHSTKLVFRATPQALCFPVRSY. Polar residues-rich tracts occupy residues 37–47 and 57–68; these read KTTSKLAPSIT and PSLQEPQSATST. The tract at residues 37 to 68 is disordered; the sequence is KTTSKLAPSITTEDEVAEQDPSLQEPQSATST.

This sequence belongs to the MGM101 family. Forms homooligomers in vitro.

The protein localises to the mitochondrion matrix. It localises to the mitochondrion nucleoid. Its function is as follows. Plays a role in the replication of the mitochondrial genome and the maintenance of its telomeres. Able to catalyze strand annealing and D-loop formation. Binds a wide variety of DNA substrates. Exhibited the highest affinity for DNA molecules carrying 3' ssDNA overhangs (Y-form, 3' FLAP, 3' overhang) and for substrates with complex structures (X-O and Fork). Forms homogeneous ring-shaped structures at the ssDNA native telomeres ends. Oligomers seem to bind to the ssDNA as a filament until they reach the double-stranded region and induce the formation of bends and loops within the double-stranded part of the molecules. The polypeptide is Mitochondrial genome maintenance protein MGM101 (Candida parapsilosis (strain CDC 317 / ATCC MYA-4646) (Yeast)).